The primary structure comprises 152 residues: Endoribonuclease YbeY (152 aa).

Residues His101, His105, and His111 each contribute to the Zn(2+) site. The tract at residues 132–152 (PSSLIERTTKPAKKAAKRKKR) is disordered. Residues 141 to 152 (KPAKKAAKRKKR) are compositionally biased toward basic residues.

Belongs to the endoribonuclease YbeY family. Requires Zn(2+) as cofactor.

The protein localises to the cytoplasm. Functionally, single strand-specific metallo-endoribonuclease involved in late-stage 70S ribosome quality control and in maturation of the 3' terminus of the 16S rRNA. The chain is Endoribonuclease YbeY from Koribacter versatilis (strain Ellin345).